The sequence spans 319 residues: Olfactory receptor 2S2 (319 aa).

The Extracellular portion of the chain corresponds to 1–26; the sequence is MEKANETSPVMGFVLLRLSAHPELEK. Residue Asn5 is glycosylated (N-linked (GlcNAc...) asparagine). Residues 27–50 form a helical membrane-spanning segment; sequence TFFVLILLMYLVILLGNGVLILVT. Over 51–58 the chain is Cytoplasmic; that stretch reads ILDSRLHT. Residues 59–80 form a helical membrane-spanning segment; the sequence is PMYFFLGNLSFLDICFTTSSVP. Topologically, residues 81–101 are extracellular; sequence LVLDSFLTPQETISFSACAVQ. Cys98 and Cys190 form a disulfide bridge. Residues 102-121 form a helical membrane-spanning segment; it reads MALSFAMAGTECLLLSMMAF. Over 122–140 the chain is Cytoplasmic; the sequence is DRYVAICNPLRYSVIMSKA. A helical membrane pass occupies residues 141-159; sequence AYMPMAASSWAIGGAASVV. Residues 160-196 lie on the Extracellular side of the membrane; that stretch reads HTSLAIQLPFCGDNVINHFTCEILAVLKLACADISIN. Residues 197 to 220 traverse the membrane as a helical segment; the sequence is VISMEVTNVIFLGVPVLFISFSYV. Residues 221–237 lie on the Cytoplasmic side of the membrane; it reads FIITTILRIPSAEGRKK. A helical transmembrane segment spans residues 238–260; it reads VFSTCSAHLTVVIVFYGTLFFMY. The Extracellular segment spans residues 261 to 279; sequence GKPKSKDSMGADKEDLSDK. The chain crosses the membrane as a helical span at residues 280 to 299; sequence LIPLFYGVVTPMLNPIIYSL. Residues 300–319 are Cytoplasmic-facing; sequence RNKDVKAAVRRLLRPKGFTQ.

The protein belongs to the G-protein coupled receptor 1 family.

The protein localises to the cell membrane. Odorant receptor. The chain is Olfactory receptor 2S2 (OR2S2) from Homo sapiens (Human).